A 1106-amino-acid polypeptide reads, in one-letter code: Carbamoyl phosphate synthase large chain (1106 aa).

The interval 1-402 (MPRRQDLNSV…ALQKAMRSLE (402 aa)) is carboxyphosphate synthetic domain. ATP-binding residues include Arg129, Arg169, Gly175, Gly176, Glu208, Ile210, Glu215, Gly241, Val242, His243, Gln285, and Glu299. The ATP-grasp 1 domain maps to 133 to 328 (KGVVERCGAE…IAKIATKLSL (196 aa)). Positions 285, 299, and 301 each coordinate Mg(2+). Positions 285, 299, and 301 each coordinate Mn(2+). The segment at 403–550 (QKGSAFSFAR…YHYSSYDRET (148 aa)) is oligomerization domain. A carbamoyl phosphate synthetic domain region spans residues 551–953 (EVAPHEKPSV…AFAKAQAAAG (403 aa)). The region spanning 681–872 (ARVLTEAGLR…MAKAAALIGT (192 aa)) is the ATP-grasp 2 domain. Residues Arg717, Lys756, Leu758, Glu763, Gly788, Ile789, His790, Ser791, Gln831, and Glu843 each contribute to the ATP site. Gln831, Glu843, and Asn845 together coordinate Mg(2+). Mn(2+)-binding residues include Gln831, Glu843, and Asn845. Positions 954–1106 (GPLPTSGSLF…ERAAQEASRD (153 aa)) constitute an MGS-like domain. An allosteric domain region spans residues 954 to 1106 (GPLPTSGSLF…ERAAQEASRD (153 aa)).

The protein belongs to the CarB family. In terms of assembly, composed of two chains; the small (or glutamine) chain promotes the hydrolysis of glutamine to ammonia, which is used by the large (or ammonia) chain to synthesize carbamoyl phosphate. Tetramer of heterodimers (alpha,beta)4. The cofactor is Mg(2+). It depends on Mn(2+) as a cofactor.

The enzyme catalyses hydrogencarbonate + L-glutamine + 2 ATP + H2O = carbamoyl phosphate + L-glutamate + 2 ADP + phosphate + 2 H(+). The catalysed reaction is hydrogencarbonate + NH4(+) + 2 ATP = carbamoyl phosphate + 2 ADP + phosphate + 2 H(+). It functions in the pathway amino-acid biosynthesis; L-arginine biosynthesis; carbamoyl phosphate from bicarbonate: step 1/1. Its pathway is pyrimidine metabolism; UMP biosynthesis via de novo pathway; (S)-dihydroorotate from bicarbonate: step 1/3. In terms of biological role, large subunit of the glutamine-dependent carbamoyl phosphate synthetase (CPSase). CPSase catalyzes the formation of carbamoyl phosphate from the ammonia moiety of glutamine, carbonate, and phosphate donated by ATP, constituting the first step of 2 biosynthetic pathways, one leading to arginine and/or urea and the other to pyrimidine nucleotides. The large subunit (synthetase) binds the substrates ammonia (free or transferred from glutamine from the small subunit), hydrogencarbonate and ATP and carries out an ATP-coupled ligase reaction, activating hydrogencarbonate by forming carboxy phosphate which reacts with ammonia to form carbamoyl phosphate. In Kocuria rhizophila (strain ATCC 9341 / DSM 348 / NBRC 103217 / DC2201), this protein is Carbamoyl phosphate synthase large chain.